The following is a 659-amino-acid chain: Crossover junction endonuclease MUS81 (659 aa).

The Helix-hairpin-helix motif 1 motif lies at 59–78; the sequence is KDLSQIKGFGKWMVKLMKGY. The ERCC4 domain maps to 404-503; that stretch reads ILILDDREKF…KKLIYILEGD (100 aa). Positions 585–622 match the Helix-hairpin-helix motif 2 motif; sequence TISDVFAIQLMQVPQVTEEIAIAVLDMYPTLLSLASAY.

This sequence belongs to the XPF family. In terms of assembly, forms a heterodimer with EME1A or EME1B. The cofactor is Mg(2+). Ca(2+) is required as a cofactor. Ubiquitous but preferentially expressed in young flowers buds, notably in anthers.

The protein localises to the nucleus. It is found in the nucleolus. Interacts with EME1 to form a DNA structure-specific endonuclease with substrate preference for branched DNA structures with a 5'-end at the branch nick. Typical substrates include 3'-flap structures, D-loops, replication forks, nicked Holliday junctions and also intact Holliday junctions with a reduced efficiency. May be required in mitosis for the processing of stalled or collapsed replication fork intermediates. Plays a role in DNA repair and in genotoxic stress-induced homologous recombination (HR) in somatic cells. Mediates a subset of meiotic recombination events that are insensitive to crossover interference. Together with SEND1, essential for the resolution of toxic replication structures to ensure genome stability, and to maintain telomere integrity and replication. The sequence is that of Crossover junction endonuclease MUS81 from Arabidopsis thaliana (Mouse-ear cress).